We begin with the raw amino-acid sequence, 186 residues long: MSDAFDINDLKRRMEGAVNALKHDLGGLRTGRASASLLEPITIEAYGSTMPINQVANISVPESRMLSVSVWDKSMVGAVERAIRDSGLGLNPITDGMTLRIPLPELNEQRRKELVKIAHQYAEQGRIAARHVRRDGMDQLKKLEKDSVISQDESRVLSEKVQKLTDDTIAEMDKIVAVKEGEIMQV.

Belongs to the RRF family.

It is found in the cytoplasm. In terms of biological role, responsible for the release of ribosomes from messenger RNA at the termination of protein biosynthesis. May increase the efficiency of translation by recycling ribosomes from one round of translation to another. This chain is Ribosome-recycling factor, found in Brucella abortus (strain S19).